Consider the following 335-residue polypeptide: DNA-directed RNA polymerase subunit alpha (335 aa).

The interval 1 to 233 is alpha N-terminal domain (alpha-NTD); that stretch reads MTRTANEFLT…QQIAIFVDLQ (233 aa). The tract at residues 247–335 is alpha C-terminal domain (alpha-CTD); sequence VDPILLRPVD…MDDRFAYRSR (89 aa).

This sequence belongs to the RNA polymerase alpha chain family. As to quaternary structure, homodimer. The RNAP catalytic core consists of 2 alpha, 1 beta, 1 beta' and 1 omega subunit. When a sigma factor is associated with the core the holoenzyme is formed, which can initiate transcription.

It carries out the reaction RNA(n) + a ribonucleoside 5'-triphosphate = RNA(n+1) + diphosphate. In terms of biological role, DNA-dependent RNA polymerase catalyzes the transcription of DNA into RNA using the four ribonucleoside triphosphates as substrates. This chain is DNA-directed RNA polymerase subunit alpha, found in Acinetobacter baylyi (strain ATCC 33305 / BD413 / ADP1).